The sequence spans 248 residues: Agamous-like MADS-box protein AGL1 (248 aa).

An MADS-box domain is found at 18–72 (RGKIEIKRIENTTNRQVTFCKRRNGLLKKAYELSVLCDAEVALVIFSTRGRLYEY). In terms of domain architecture, K-box spans 102–192 (TQYYQQEASK…RAKIAEGARL (91 aa)).

Interacts with AGL15 and AGL16.

It is found in the nucleus. Probable transcription factor. Interacts genetically with TT16/AGL32 in a partially antagonistic manner during flower development. Is essential for the coordination of cell divisions in ovule, seed coat development and endosperm formation. This chain is Agamous-like MADS-box protein AGL1 (AGL1), found in Arabidopsis thaliana (Mouse-ear cress).